The primary structure comprises 354 residues: Ephrin-4 (354 aa).

A signal peptide spans 1–22 (MKRPLDFLLAICLILLRSSTFA). The Ephrin RBD domain occupies 23–173 (DEHTVHWNST…SKNMRLSMKV (151 aa)). A glycan (N-linked (GlcNAc...) asparagine) is linked at Asn-30. Cystine bridges form between Cys-55/Cys-92 and Cys-80/Cys-162. Residues 173–196 (VLSSQPTPSPSSKPARSRTDARRQ) form a disordered region. Positions 175–186 (SSQPTPSPSSKP) are enriched in low complexity. Ser-335 carries GPI-anchor amidated serine lipidation. Positions 336-354 (SSSLPTFLIVFLIAVNLLF) are cleaved as a propeptide — removed in mature form.

The protein belongs to the ephrin family. Post-translationally, may undergo proteolysis by metalloprotease sup-17 to give rise to a soluble form.

Its subcellular location is the cell membrane. In terms of biological role, regulates the formation or stabilization of cell-cell contacts at several stages of epithelial morphogenesis. In early embryonic development, involved in ventral closure of the epidermis. During male tail morphogenesis, regulates precursor cell sorting together with mab-20 and allows the formation of distinct sensory rays. Probably acts as a ligand for lad-2 to regulate axon guidance of several neurons including SDQL, SDQR, SMD and PLN neurons during neurogenesis. This is Ephrin-4 (efn-4) from Caenorhabditis briggsae.